The following is a 644-amino-acid chain: Ribonuclease R (644 aa).

Residues 211 to 529 (RINYSHIPFI…LHRLLKELLF (319 aa)) form the RNB domain. One can recognise an S1 motif domain in the interval 573-644 (LELLEKEFLG…ITERIKEHVS (72 aa)).

Belongs to the RNR ribonuclease family. RNase R subfamily.

Its subcellular location is the cytoplasm. The enzyme catalyses Exonucleolytic cleavage in the 3'- to 5'-direction to yield nucleoside 5'-phosphates.. In terms of biological role, 3'-5' exoribonuclease that releases 5'-nucleoside monophosphates and is involved in maturation of structured RNAs. In Helicobacter pylori (strain ATCC 700392 / 26695) (Campylobacter pylori), this protein is Ribonuclease R.